A 945-amino-acid chain; its full sequence is Isoleucine--tRNA ligase 1 (945 aa).

The 'HIGH' region signature appears at 66-76; it reads PYANGDIHLGH. E581 serves as a coordination point for L-isoleucyl-5'-AMP. The short motif at 622-626 is the 'KMSKS' region element; that stretch reads KMSKS. K625 is an ATP binding site. The Zn(2+) site is built by C908, C911, C928, and C931.

It belongs to the class-I aminoacyl-tRNA synthetase family. IleS type 1 subfamily. Monomer. Zn(2+) serves as cofactor.

It localises to the cytoplasm. It catalyses the reaction tRNA(Ile) + L-isoleucine + ATP = L-isoleucyl-tRNA(Ile) + AMP + diphosphate. In terms of biological role, catalyzes the attachment of isoleucine to tRNA(Ile). As IleRS can inadvertently accommodate and process structurally similar amino acids such as valine, to avoid such errors it has two additional distinct tRNA(Ile)-dependent editing activities. One activity is designated as 'pretransfer' editing and involves the hydrolysis of activated Val-AMP. The other activity is designated 'posttransfer' editing and involves deacylation of mischarged Val-tRNA(Ile). This chain is Isoleucine--tRNA ligase 1, found in Burkholderia mallei (strain ATCC 23344).